The sequence spans 60 residues: Large ribosomal subunit protein bL32 (60 aa).

The segment at 1–36 (MAVQQNKKSPSKRGMHRSHNALNTPGLAIEPTTGET) is disordered. The span at 9-19 (SPSKRGMHRSH) shows a compositional bias: basic residues.

Belongs to the bacterial ribosomal protein bL32 family.

This is Large ribosomal subunit protein bL32 from Methylibium petroleiphilum (strain ATCC BAA-1232 / LMG 22953 / PM1).